The chain runs to 278 residues: Acyl-[acyl-carrier-protein]--UDP-N-acetylglucosamine O-acyltransferase (278 aa).

It belongs to the transferase hexapeptide repeat family. LpxA subfamily. In terms of assembly, homotrimer.

It is found in the cytoplasm. The catalysed reaction is a (3R)-hydroxyacyl-[ACP] + UDP-N-acetyl-alpha-D-glucosamine = a UDP-3-O-[(3R)-3-hydroxyacyl]-N-acetyl-alpha-D-glucosamine + holo-[ACP]. It functions in the pathway glycolipid biosynthesis; lipid IV(A) biosynthesis; lipid IV(A) from (3R)-3-hydroxytetradecanoyl-[acyl-carrier-protein] and UDP-N-acetyl-alpha-D-glucosamine: step 1/6. Its function is as follows. Involved in the biosynthesis of lipid A, a phosphorylated glycolipid that anchors the lipopolysaccharide to the outer membrane of the cell. The chain is Acyl-[acyl-carrier-protein]--UDP-N-acetylglucosamine O-acyltransferase from Brucella abortus (strain S19).